The chain runs to 272 residues: Putative B3 domain-containing protein Os02g0455900 (272 aa).

The TF-B3 DNA-binding region spans 30 to 134 (GKVLMPSDVS…RFFICCRCTC (105 aa)). The tract at residues 189 to 227 (TASLGCAAAQPPQVPPTPTPRRRRRSMMVHPEPPEHTTD) is disordered.

The protein resides in the nucleus. The polypeptide is Putative B3 domain-containing protein Os02g0455900 (Oryza sativa subsp. japonica (Rice)).